A 630-amino-acid chain; its full sequence is ATP synthase subunit alpha (630 aa).

173–180 (GDRQTGKT) provides a ligand contact to ATP. A disordered region spans residues 592 to 630 (AGGASTAADEDGAGDDEEEAPAPKAKSKNAKSASKAKEK). A compositionally biased stretch (acidic residues) spans 599–611 (ADEDGAGDDEEEA).

It belongs to the ATPase alpha/beta chains family. F-type ATPases have 2 components, CF(1) - the catalytic core - and CF(0) - the membrane proton channel. CF(1) has five subunits: alpha(3), beta(3), gamma(1), delta(1), epsilon(1). CF(0) has three main subunits: a(1), b(2) and c(9-12). The alpha and beta chains form an alternating ring which encloses part of the gamma chain. CF(1) is attached to CF(0) by a central stalk formed by the gamma and epsilon chains, while a peripheral stalk is formed by the delta and b chains.

The protein localises to the cell inner membrane. It catalyses the reaction ATP + H2O + 4 H(+)(in) = ADP + phosphate + 5 H(+)(out). Its function is as follows. Produces ATP from ADP in the presence of a proton gradient across the membrane. The alpha chain is a regulatory subunit. The protein is ATP synthase subunit alpha of Sorangium cellulosum (strain So ce56) (Polyangium cellulosum (strain So ce56)).